A 320-amino-acid polypeptide reads, in one-letter code: Cytochrome f (320 aa).

The signal sequence occupies residues 1-35 (MQNRNTFSWVKEEMTRFISVSIMIYVITRTSISNA). 4 residues coordinate heme: Y36, C56, C59, and H60. The chain crosses the membrane as a helical span at residues 286-306 (VQGLLFFLASVILAQIFLVLK).

This sequence belongs to the cytochrome f family. In terms of assembly, the 4 large subunits of the cytochrome b6-f complex are cytochrome b6, subunit IV (17 kDa polypeptide, petD), cytochrome f and the Rieske protein, while the 4 small subunits are PetG, PetL, PetM and PetN. The complex functions as a dimer. It depends on heme as a cofactor.

It is found in the plastid. Its subcellular location is the chloroplast thylakoid membrane. Functionally, component of the cytochrome b6-f complex, which mediates electron transfer between photosystem II (PSII) and photosystem I (PSI), cyclic electron flow around PSI, and state transitions. The sequence is that of Cytochrome f from Calycanthus floridus var. glaucus (Eastern sweetshrub).